A 400-amino-acid polypeptide reads, in one-letter code: uncharacterized protein (400 aa).

The N-terminal stretch at 1 to 23 (MSRKLLLALTFLVVLGIAVVVMA) is a signal peptide.

This is an uncharacterized protein from Archaeoglobus fulgidus (strain ATCC 49558 / DSM 4304 / JCM 9628 / NBRC 100126 / VC-16).